The following is a 541-amino-acid chain: Chaperonin GroEL (541 aa).

Residues 29-32 (TLGP), 86-90 (DGTTT), Gly-413, 476-478 (NAA), and Asp-492 contribute to the ATP site.

Belongs to the chaperonin (HSP60) family. Forms a cylinder of 14 subunits composed of two heptameric rings stacked back-to-back. Interacts with the co-chaperonin GroES.

The protein resides in the cytoplasm. It catalyses the reaction ATP + H2O + a folded polypeptide = ADP + phosphate + an unfolded polypeptide.. Functionally, together with its co-chaperonin GroES, plays an essential role in assisting protein folding. The GroEL-GroES system forms a nano-cage that allows encapsulation of the non-native substrate proteins and provides a physical environment optimized to promote and accelerate protein folding. The polypeptide is Chaperonin GroEL (Streptococcus equi subsp. zooepidemicus (strain MGCS10565)).